The primary structure comprises 568 residues: Zinc finger protein 583 (568 aa).

The KRAB domain occupies L6–P77. C2H2-type zinc fingers lie at residues L211–H233, Y239–H261, Y267–H289, Y295–H317, F323–H345, Y351–H373, Y379–H401, Y407–H429, Y435–H457, Y463–H485, Y491–H513, and Y519–H541.

It belongs to the krueppel C2H2-type zinc-finger protein family.

The protein localises to the nucleus. Functionally, may be involved in transcriptional regulation. The sequence is that of Zinc finger protein 583 (Znf583) from Mus musculus (Mouse).